A 61-amino-acid polypeptide reads, in one-letter code: Three-finger hemachatoxin (61 aa).

4 disulfides stabilise this stretch: C3–C22, C15–C39, C43–C54, and C55–C60.

This sequence belongs to the three-finger toxin family. Short-chain subfamily. Type IB cytotoxin sub-subfamily. Expressed by the venom gland.

It is found in the secreted. Functionally, this protein lyses red blood cells and has cardiotoxic and hypotensive activities. The sequence is that of Three-finger hemachatoxin from Hemachatus haemachatus (Rinkhals).